The primary structure comprises 293 residues: Undecaprenyl-diphosphatase (293 aa).

7 helical membrane-spanning segments follow: residues 3–23 (IALAIKALILGIVEGLTEFLP), 43–63 (KGKIFEIVIQFGAILAVCWEF), 85–105 (LNVIVATIPAITLALIFGKAI), 109–129 (LFNPIVVASAFIIGGLVILWA), 203–223 (VATEFSFFLAIPVIFGATVYE), 238–258 (IFGIGFVAAFISAFFCVRWLL), and 269–289 (FAWYRIVFGVIVLVTAYTHLI).

It belongs to the UppP family.

The protein resides in the cell inner membrane. The enzyme catalyses di-trans,octa-cis-undecaprenyl diphosphate + H2O = di-trans,octa-cis-undecaprenyl phosphate + phosphate + H(+). Functionally, catalyzes the dephosphorylation of undecaprenyl diphosphate (UPP). Confers resistance to bacitracin. The sequence is that of Undecaprenyl-diphosphatase from Ralstonia nicotianae (strain ATCC BAA-1114 / GMI1000) (Ralstonia solanacearum).